We begin with the raw amino-acid sequence, 726 residues long: MAPAKWLIASLAFASTGLAFTPEDFISAPRRGEAIPDPKGQFAVFPVSKYNFDTKDRPSGWNLLNLKTGDISVLTTDADVSEITWLGEGTNLLYVNGTDSVKGGVGIWISDAKNFGNAYKAGSIPGAFQGFKLAKSGDKINFVGYGQSTTKGDLYNEAAIEKPVSSARIYDSLFVRHWDAYVGTQFNAVFSGALTKNGNKYSFDGKLKNLVQPVKYAESPYPPFGGSGDYDLSPDGKTVAFMSKAPELPKANLTTSYIFTVPHDGSKVAEPINKRNGPRTPHGIEGASSSPVFSPDSKRIAYLQMATKNYESDRRVIHIAEVGSNKPAQRIASNWDRSPESIKWSSDGRTLYVTAEEHATGKLFTLPSDARDNHMPSAVKHDGSVSAFSFVGSSKSVLITGNSLWSNALYQIATPGRPNRKLFYANEHDPQLKGLGPNDIEPLWVDGARTKIHSWIVKPTGFDKNKVYPLAFLIHGGPQGSWGDNWSTRWNPRVWADQGYVVIAPNPTGSTGFGQKLTDDITNDWGGAPYKDLFKIWEHVRDNLKYVDTDNGIAAGASFGGFMINWIQGQELGRKFKALVSHDGTFVGSSKIGTDELFFIEHDFNGTFFEARQNYDRWDCSKPEYVAKWSTPQLVVHSDYDFRLSVAEGVGLFNVLQEKGVPSRLLNFPDESHCVTKPENSLVWHQQVLGWINKFSGINKSNPKAIKLSDCKVEVIDHEAGSYFDY.

Residues 1 to 19 form the signal peptide; sequence MAPAKWLIASLAFASTGLA. N-linked (GlcNAc...) asparagine glycans are attached at residues Asn-96 and Asn-252. Residues 268 to 292 are disordered; the sequence is VAEPINKRNGPRTPHGIEGASSSPV. Asn-485 carries an N-linked (GlcNAc...) asparagine glycan. Catalysis depends on Ser-558, which acts as the Charge relay system. Asn-605 carries an N-linked (GlcNAc...) asparagine glycan. Residues Asp-641 and His-673 each act as charge relay system in the active site. Asn-699 carries N-linked (GlcNAc...) asparagine glycosylation.

The protein belongs to the peptidase S9C family.

Its subcellular location is the secreted. Functionally, extracellular dipeptidyl-peptidase which removes N-terminal dipeptides sequentially from polypeptides having unsubstituted N-termini. Contributes to pathogenicity. The polypeptide is Dipeptidyl-peptidase 5 (DPP5) (Arthroderma otae (Microsporum canis)).